The sequence spans 932 residues: MMKKITERQSPLKLLEKKRAKAPEQPTPPIQEEPEPVSNVLQGDDILALAIKKEDLRKQHVPQFEETGEKPVVTQKFIIRKLKPKDSSKRVYHLVAHPATPDAATKPLDYSGPHDSFLSSGQILPHQILGSLQDFKRIAVARGNTQLAKLIHIQPCLMTLISAKEEPKPKPPKEEERPSPWAPPPQHNFLKNWRRHIALRKKQQEALSKHLKKPASELLMHTGESYRKIQEEREVIDRALPTQHDGKATSWFWSPLEYLGDEMTGLLMTKKKTQRGLVEPITHIRKPLSIQVETGLPAQKDAWYRYTWDRSLFLIYRRKELQSIMAELDFSQQDIDGLEVVGHGKPFSSVTVEEHLPPEKIQKSSSEDTVFLDSLTNLSDMVPMPILGPSLLFCGKPACWVRGSNPEDKKNIGIGVRLTFETLEGERTSSELTVVNNGTVAIWYNWRRRPHQDFFQDLKQNKTQRFYFNNREGVILPGETKHFTFFFKSLNAGIFRESWEFGTHPTLLGGAVLQVTLHAISLTQDIFMDERKLLETKLAAHEAITIAQSVLQDLLRGISTPERTPSPVDAYLTEEDLFNYRNPRLHYQHQVVQNLHQLWQQYRKAKATQKETPSLRTPVPLLLVEKASGSISPRNLVSEYSQLSPHQEMDTARKTRDFFLSLKSSIGKKSVARKSIMEELLVEEGPDRETTQRPWALKSISPPKWNLCLEDFRQAVMTFPEELQREDALIQLNKAAMELCQEQKPLQSDLLYQMCLQLWRDVIDSLVSQSLWLRNLLGLPEKETVYLDLPDEQGQKSPPVTESKVTSGKAGKEDRRGGAQEKKQLGTKDKDDKRGSKTPGKEDRPNSKKLKPKDDKKVVKSASRDRLLSEDPPPDSTAPSQEPIDPLVMEKYTQRLHAEVYALLDNLVTDVMVLADELSSTKNVEESLRFCS.

Disordered stretches follow at residues 1–39 and 165–187; these read MMKKITERQSPLKLLEKKRAKAPEQPTPPIQEEPEPVSN and EEPKPKPPKEEERPSPWAPPPQH. Over residues 165–178 the composition is skewed to basic and acidic residues; the sequence is EEPKPKPPKEEERP. The residue at position 559 (Ser-559) is a Phosphoserine. Thr-560 carries the post-translational modification Phosphothreonine. Phosphoserine is present on Ser-566. Residues 789 to 886 are disordered; it reads LPDEQGQKSP…TAPSQEPIDP (98 aa). Positions 795-806 are enriched in polar residues; that stretch reads QKSPPVTESKVT. The span at 810–869 shows a compositional bias: basic and acidic residues; that stretch reads AGKEDRRGGAQEKKQLGTKDKDDKRGSKTPGKEDRPNSKKLKPKDDKKVVKSASRDRLLS.

In terms of assembly, interacts with MYCBP.

It is found in the cytoplasm. The protein resides in the membrane. Its function is as follows. May play a role in spermatogenesis. May be involved in synaptic processes. This is MYCBP-associated protein from Mus musculus (Mouse).